Consider the following 79-residue polypeptide: ATP synthase subunit c (79 aa).

2 helical membrane-spanning segments follow: residues 7–27 (VSGM…GAGI) and 56–76 (IGSA…LFLI).

Belongs to the ATPase C chain family. F-type ATPases have 2 components, F(1) - the catalytic core - and F(0) - the membrane proton channel. F(1) has five subunits: alpha(3), beta(3), gamma(1), delta(1), epsilon(1). F(0) has three main subunits: a(1), b(2) and c(10-14). The alpha and beta chains form an alternating ring which encloses part of the gamma chain. F(1) is attached to F(0) by a central stalk formed by the gamma and epsilon chains, while a peripheral stalk is formed by the delta and b chains.

The protein resides in the cell membrane. Its function is as follows. F(1)F(0) ATP synthase produces ATP from ADP in the presence of a proton or sodium gradient. F-type ATPases consist of two structural domains, F(1) containing the extramembraneous catalytic core and F(0) containing the membrane proton channel, linked together by a central stalk and a peripheral stalk. During catalysis, ATP synthesis in the catalytic domain of F(1) is coupled via a rotary mechanism of the central stalk subunits to proton translocation. Functionally, key component of the F(0) channel; it plays a direct role in translocation across the membrane. A homomeric c-ring of between 10-14 subunits forms the central stalk rotor element with the F(1) delta and epsilon subunits. The chain is ATP synthase subunit c from Clostridium botulinum (strain Hall / ATCC 3502 / NCTC 13319 / Type A).